A 242-amino-acid chain; its full sequence is MRPTGRAAEQVRPITITRHYTKHAEGSVLVEFGDTKVLCNASVEEGVPRFLKGQGQGWVTAEYGMLPRSTHTRNAREAARGKQGGRTMEIQRLIARSLRAAVDLKKLGEYTITLDCDVIQADGGTRTASITGACVALVDALNKIVEAGKLKESPLKSMVAAVSVGIVDGEGRCDLEYVEDSAAETDMNVVMMEDGRMIEVQGTAEGEPFSHDELLSLLALAKGGLEDIFDAQRNALKQNALK.

Phosphate-binding positions include Arg-86 and 124-126 (GTR).

It belongs to the RNase PH family. Homohexameric ring arranged as a trimer of dimers.

The enzyme catalyses tRNA(n+1) + phosphate = tRNA(n) + a ribonucleoside 5'-diphosphate. In terms of biological role, phosphorolytic 3'-5' exoribonuclease that plays an important role in tRNA 3'-end maturation. Removes nucleotide residues following the 3'-CCA terminus of tRNAs; can also add nucleotides to the ends of RNA molecules by using nucleoside diphosphates as substrates, but this may not be physiologically important. Probably plays a role in initiation of 16S rRNA degradation (leading to ribosome degradation) during starvation. This Photorhabdus laumondii subsp. laumondii (strain DSM 15139 / CIP 105565 / TT01) (Photorhabdus luminescens subsp. laumondii) protein is Ribonuclease PH.